The primary structure comprises 209 residues: MFVRPESGEQGPETLAPASGAEIQRFPVPAVEPVPAPGADSPPGTALELEEAPEPSCRCPGTAQDQPSEELPDFMAPPVEPPASALELKVWLELEVAERGGQHSSSQQLPHCSQSWAQWKLWRQRPGFAIWAPLPHWRGTSLIQQSSSPAAEGPAATAAGAVCLPAGGAGEQEKEPVSRGSSRSSCSQRRPPPPGMEVCPQLGIWAICP.

2 disordered regions span residues 1–80 and 164–197; these read MFVR…PPVE and LPAG…PGME. Positions 178 to 189 are enriched in low complexity; it reads SRGSSRSSCSQR.

This is an uncharacterized protein from Homo sapiens (Human).